Consider the following 250-residue polypeptide: LexA repressor (250 aa).

Residues 1–21 (MTSQERGTRRGDTRGNVRDFP) are compositionally biased toward basic and acidic residues. Residues 1 to 33 (MTSQERGTRRGDTRGNVRDFPDSPADASGLTQR) form a disordered region. Positions 54 to 74 (VREIGEAVGLTSTSSVAHQLK) form a DNA-binding region, H-T-H motif. Catalysis depends on for autocatalytic cleavage activity residues serine 174 and lysine 211.

This sequence belongs to the peptidase S24 family. In terms of assembly, homodimer.

The catalysed reaction is Hydrolysis of Ala-|-Gly bond in repressor LexA.. Functionally, represses a number of genes involved in the response to DNA damage (SOS response), including recA and lexA. In the presence of single-stranded DNA, RecA interacts with LexA causing an autocatalytic cleavage which disrupts the DNA-binding part of LexA, leading to derepression of the SOS regulon and eventually DNA repair. The sequence is that of LexA repressor from Parafrankia sp. (strain EAN1pec).